We begin with the raw amino-acid sequence, 353 residues long: Photosystem II protein D1 (353 aa).

Thr-2 bears the N-acetylthreonine mark. Phosphothreonine is present on Thr-2. Transmembrane regions (helical) follow at residues 29-46 (YIGW…TATS), 118-133 (HFLL…EWEL), and 142-156 (WIAV…AATA). His-118 contributes to the chlorophyll a binding site. Position 126 (Tyr-126) interacts with pheophytin a. 2 residues coordinate [CaMn4O5] cluster: Asp-170 and Glu-189. A helical membrane pass occupies residues 197–218 (FHMLGVAGVFGGSLFSAMHGSL). A chlorophyll a-binding site is contributed by His-198. A quinone is bound by residues His-215 and 264–265 (SF). Position 215 (His-215) interacts with Fe cation. His-272 provides a ligand contact to Fe cation. The chain crosses the membrane as a helical span at residues 274-288 (FLAAWPVVGIWFTAL). Residues His-332, Glu-333, Asp-342, and Ala-344 each contribute to the [CaMn4O5] cluster site. Positions 345-353 (AVEAPSING) are excised as a propeptide.

This sequence belongs to the reaction center PufL/M/PsbA/D family. As to quaternary structure, PSII is composed of 1 copy each of membrane proteins PsbA, PsbB, PsbC, PsbD, PsbE, PsbF, PsbH, PsbI, PsbJ, PsbK, PsbL, PsbM, PsbT, PsbX, PsbY, PsbZ, Psb30/Ycf12, at least 3 peripheral proteins of the oxygen-evolving complex and a large number of cofactors. It forms dimeric complexes. The D1/D2 heterodimer binds P680, chlorophylls that are the primary electron donor of PSII, and subsequent electron acceptors. It shares a non-heme iron and each subunit binds pheophytin, quinone, additional chlorophylls, carotenoids and lipids. D1 provides most of the ligands for the Mn4-Ca-O5 cluster of the oxygen-evolving complex (OEC). There is also a Cl(-1) ion associated with D1 and D2, which is required for oxygen evolution. The PSII complex binds additional chlorophylls, carotenoids and specific lipids. serves as cofactor. Tyr-161 forms a radical intermediate that is referred to as redox-active TyrZ, YZ or Y-Z. Post-translationally, C-terminally processed by CTPA; processing is essential to allow assembly of the oxygen-evolving complex and thus photosynthetic growth.

It localises to the plastid. The protein resides in the chloroplast thylakoid membrane. It carries out the reaction 2 a plastoquinone + 4 hnu + 2 H2O = 2 a plastoquinol + O2. This is one of the two reaction center proteins of photosystem II. In terms of biological role, photosystem II (PSII) is a light-driven water:plastoquinone oxidoreductase that uses light energy to abstract electrons from H(2)O, generating O(2) and a proton gradient subsequently used for ATP formation. It consists of a core antenna complex that captures photons, and an electron transfer chain that converts photonic excitation into a charge separation. The D1/D2 (PsbA/PsbD) reaction center heterodimer binds P680, the primary electron donor of PSII as well as several subsequent electron acceptors. The protein is Photosystem II protein D1 of Pisum sativum (Garden pea).